A 430-amino-acid chain; its full sequence is Adenylosuccinate synthetase (430 aa).

Residues 12–18 (GDEGKGK) and 40–42 (GHT) each bind GTP. Residue D13 is the Proton acceptor of the active site. Mg(2+)-binding residues include D13 and G40. Residues 13 to 16 (DEGK), 38 to 41 (NAGH), T130, R144, Q224, T239, and R303 each bind IMP. The active-site Proton donor is H41. A substrate-binding site is contributed by 299-305 (VVTGRPR). Residues R305, 331–333 (KLD), and 413–415 (STS) each bind GTP.

The protein belongs to the adenylosuccinate synthetase family. In terms of assembly, homodimer. The cofactor is Mg(2+).

The protein localises to the cytoplasm. The catalysed reaction is IMP + L-aspartate + GTP = N(6)-(1,2-dicarboxyethyl)-AMP + GDP + phosphate + 2 H(+). Its pathway is purine metabolism; AMP biosynthesis via de novo pathway; AMP from IMP: step 1/2. Functionally, plays an important role in the de novo pathway of purine nucleotide biosynthesis. Catalyzes the first committed step in the biosynthesis of AMP from IMP. The polypeptide is Adenylosuccinate synthetase (Azorhizobium caulinodans (strain ATCC 43989 / DSM 5975 / JCM 20966 / LMG 6465 / NBRC 14845 / NCIMB 13405 / ORS 571)).